The primary structure comprises 339 residues: MTVREPLRPVLYDDARDLVRLLDQKALPAEERWLELSTAEAVAAAIQDLTVRGAPAIGVAAAYALAVEARRGAGPERLRAAADLLARARPTAVNLAWAVRRMSARIGAPASDVLAEAHAIRDEDEAACRRIGALGAPLVPARARVLTHCNAGALATAGYGTALGVVRAAVEAGNAISVFADETRPFLQGARLTAWELHRDGIPVTVLTDGMAGWLMARGEIGCVVVGADRIAANGDVANKIGTYALAVLAAHHRLPFYVAAPWSTVDLATPTGADIPIEERASDEVVVLAGQRIAPAGVPARYPAFDVTPAALVTAIVTERGVVRAPHAAGLAALATAR.

Substrate contacts are provided by residues 52–54 (RGA), Arg89, and Gln188. Residue Asp229 is the Proton donor of the active site. 239 to 240 (NK) provides a ligand contact to substrate.

The protein belongs to the eIF-2B alpha/beta/delta subunits family. MtnA subfamily.

The enzyme catalyses 5-(methylsulfanyl)-alpha-D-ribose 1-phosphate = 5-(methylsulfanyl)-D-ribulose 1-phosphate. The protein operates within amino-acid biosynthesis; L-methionine biosynthesis via salvage pathway; L-methionine from S-methyl-5-thio-alpha-D-ribose 1-phosphate: step 1/6. Its function is as follows. Catalyzes the interconversion of methylthioribose-1-phosphate (MTR-1-P) into methylthioribulose-1-phosphate (MTRu-1-P). The polypeptide is Methylthioribose-1-phosphate isomerase (Anaeromyxobacter dehalogenans (strain 2CP-C)).